Consider the following 1166-residue polypeptide: Reverse gyrase (1166 aa).

Residues 1 to 40 form an RG N-terminal-type zinc finger; it reads MINVMYKNSCPNCGGDISADRLLNGLPCETCLPYINGIDG. Residues Cys-10, Cys-13, Cys-28, and Cys-31 each coordinate Zn(2+). Residues Gln-92 and 109 to 116 contribute to the ATP site; that span reads APTGLGKT. In terms of domain architecture, Helicase ATP-binding spans 96-285; that stretch reads LRRLVSNQSF…ALRLLTGFEP (190 aa). Residues 190 to 193 carry the DEAD box motif; that stretch reads DDAD. The topoisomerase I stretch occupies residues 576–1166; sequence FNISTGLLIV…VNPLKSEQNV (591 aa). The Toprim domain occupies 580–743; it reads TGLLIVESPT…NIYRITYHEI (164 aa). Glu-586 contacts Mg(2+). The RG C-terminal-type zinc finger occupies 662–689; sequence IKKCLDCNKTFSIASDKCPYCGSTNVQT. Cys-665, Cys-668, Cys-679, and Cys-682 together coordinate Zn(2+). Asp-712 contributes to the Mg(2+) binding site. The Topo IA-type catalytic domain maps to 759-1157; sequence NTNLVMSQIV…EIFSEISTLV (399 aa). Catalysis depends on Tyr-903, which acts as the O-(5'-phospho-DNA)-tyrosine intermediate.

The protein in the N-terminal section; belongs to the DEAD box helicase family. DDVD subfamily. In the C-terminal section; belongs to the type IA topoisomerase family. In terms of assembly, monomer. Zn(2+) is required as a cofactor. The cofactor is Mg(2+).

It localises to the cytoplasm. It carries out the reaction ATP + H2O = ADP + phosphate + H(+). Its activity is regulated as follows. Inhibited by UV light-induced lesions; substrate is completely cleaved but a nicked form accumulates, suggesting the reaction is blocked between the cleavage and ligation steps. Inhibited by actinomycin D; substrate DNA remains negatively supercoiled in this case. Activity is stimulated by SSB from S.solfataricus strain P2. Positive supercoiling is inhibited by Sul7d (also called Sso7d) from S.solfataricus strain MT4; SSB from S.solfataricus strain P2 relieves this inhibition. Its function is as follows. Modifies the topological state of DNA by introducing positive supercoils in an ATP-dependent process. Increases the linking number in steps of +1. In vitro requires high concentrations to supercoil negatively supercoiled DNA, relaxes plasmid DNA first; DNA single-strand binding protein (SSB) from S.solfataricus strain P2 stimulates positive supercoiling. SSB stimulates DNA-binding by reverse gyrase, and thus all subsequent steps. Binds to single-stranded DNA, transiently cleaves and then rejoins the ends, introducing a positive supercoil in the process. The scissile phosphodiester is attacked by the catalytic tyrosine of the enzyme, resulting in the formation of a DNA-(5'-phosphotyrosyl)-enzyme intermediate. May be involved in DNA damage response. Probably involved in rewinding DNA strands in regions of the chromosome that have opened up to allow replication, transcription, DNA repair and/or for DNA protection. In Saccharolobus shibatae (strain ATCC 51178 / DSM 5389 / JCM 8931 / NBRC 15437 / B12) (Sulfolobus shibatae), this protein is Reverse gyrase.